We begin with the raw amino-acid sequence, 129 residues long: uncharacterized protein (129 aa).

The signal sequence occupies residues 1–24 (MAFGWHSMHGSIIWFLQIAQLSTA). Transmembrane regions (helical) follow at residues 38–58 (ISNL…CAIF) and 95–115 (IAHI…FTPL).

The protein localises to the membrane. This is an uncharacterized protein from Saccharomyces cerevisiae (strain ATCC 204508 / S288c) (Baker's yeast).